Consider the following 329-residue polypeptide: MNSETLPAELPATLTIASRESRLAMWQAEHVRDALRKLYPACDVKILGMTTRGDQILDRTLSKVGGKGLFVKELESALADGRADLAVHSLKDVPMELPAGFALAAVMSREDPRDAFVSNDYASLDALPAGAVVGTSSLRREAMLRARYPRLDVRPLRGNLDTRLAKLDRGDYAAIILAAAGLKRLGLAARIRALLDVEDSLPAAGQGALGIEIAAGRADVAAWLAPLHDHATALAVEAERAVSRALGGSCEVPLAAHAVWRGDELHLTGSVSTTDGARVLAARAQSRAATAADALALGRAVSDELERQGARAIVDALVAASAQAQKGGA.

C250 is subject to S-(dipyrrolylmethanemethyl)cysteine.

Belongs to the HMBS family. In terms of assembly, monomer. Dipyrromethane is required as a cofactor.

It catalyses the reaction 4 porphobilinogen + H2O = hydroxymethylbilane + 4 NH4(+). It participates in porphyrin-containing compound metabolism; protoporphyrin-IX biosynthesis; coproporphyrinogen-III from 5-aminolevulinate: step 2/4. Its function is as follows. Tetrapolymerization of the monopyrrole PBG into the hydroxymethylbilane pre-uroporphyrinogen in several discrete steps. The polypeptide is Porphobilinogen deaminase (Burkholderia thailandensis (strain ATCC 700388 / DSM 13276 / CCUG 48851 / CIP 106301 / E264)).